A 374-amino-acid polypeptide reads, in one-letter code: Carbamoyl phosphate synthase small chain (374 aa).

The CPSase stretch occupies residues 1 to 186 (MTEPAILVLE…DRNEWKRAAP (186 aa)). Residues S47, G237, and G239 each coordinate L-glutamine. One can recognise a Glutamine amidotransferase type-1 domain in the interval 189–374 (KVVAYDYGVK…RFITMMAAQS (186 aa)). C265 functions as the Nucleophile in the catalytic mechanism. Positions 266, 269, 307, 309, and 310 each coordinate L-glutamine. Active-site residues include H349 and E351.

This sequence belongs to the CarA family. Composed of two chains; the small (or glutamine) chain promotes the hydrolysis of glutamine to ammonia, which is used by the large (or ammonia) chain to synthesize carbamoyl phosphate. Tetramer of heterodimers (alpha,beta)4.

It carries out the reaction hydrogencarbonate + L-glutamine + 2 ATP + H2O = carbamoyl phosphate + L-glutamate + 2 ADP + phosphate + 2 H(+). The enzyme catalyses L-glutamine + H2O = L-glutamate + NH4(+). Its pathway is amino-acid biosynthesis; L-arginine biosynthesis; carbamoyl phosphate from bicarbonate: step 1/1. The protein operates within pyrimidine metabolism; UMP biosynthesis via de novo pathway; (S)-dihydroorotate from bicarbonate: step 1/3. In terms of biological role, small subunit of the glutamine-dependent carbamoyl phosphate synthetase (CPSase). CPSase catalyzes the formation of carbamoyl phosphate from the ammonia moiety of glutamine, carbonate, and phosphate donated by ATP, constituting the first step of 2 biosynthetic pathways, one leading to arginine and/or urea and the other to pyrimidine nucleotides. The small subunit (glutamine amidotransferase) binds and cleaves glutamine to supply the large subunit with the substrate ammonia. This chain is Carbamoyl phosphate synthase small chain, found in Xylella fastidiosa (strain 9a5c).